Reading from the N-terminus, the 188-residue chain is UPF0314 protein Sala_3154 (188 aa).

3 helical membrane passes run 8–28 (TGWL…IFMG), 57–77 (WYSF…RWIM), and 143–163 (MRWW…LWTI).

The protein belongs to the UPF0314 family.

The protein localises to the cell membrane. In Sphingopyxis alaskensis (strain DSM 13593 / LMG 18877 / RB2256) (Sphingomonas alaskensis), this protein is UPF0314 protein Sala_3154.